Reading from the N-terminus, the 243-residue chain is Pleckstrin homology domain-containing family B member 1 (243 aa).

Residues 21–128 (ALVRGGWLWR…WKTALMEANS (108 aa)) form the PH domain.

In terms of assembly, binds transducins. Homodimer. Interacts (via PH domain) with MYO1C. Interacts (via PH domain) with MYO7A. As to expression, highly expressed in retina and brain. In retina, abundantly expressed in photoreceptors. Isoform 4 is the predominant isoform expressed in mature olfactory receptor neurons and vestibular and cochlear hair cells. Also expressed in cells with possible sensory function, including peripheral retinal ganglion cells, cochlear interdental cells, and neurons of the circumventricular organ (at protein level).

It localises to the membrane. Its subcellular location is the cytoplasm. This chain is Pleckstrin homology domain-containing family B member 1 (Plekhb1), found in Mus musculus (Mouse).